The chain runs to 487 residues: 1-hydroxycarotenoid 3,4-desaturase (487 aa).

FAD-binding positions include G12, E31, K39, 55-56, V247, N275, L431, G461, and 468-469; these read SL and GI.

Belongs to the carotenoid/retinoid oxidoreductase family. Monomer.

It catalyses the reaction rhodopin + A = (3E)-3,4-didehydrorhodopin + AH2. The enzyme catalyses 1'-hydroxy-gamma-carotene + A = 1'-hydroxytorulene + AH2. It carries out the reaction 1-hydroxy-all-trans-1,2-dihydro-neurosporene + A = demethylspheroidene + AH2. The catalysed reaction is 1,1'-dihydroxy-1,1',2,2'-tetrahydroneurosporene + A = 1'-hydroxy-demethylspheroidene + AH2. It catalyses the reaction 1,1'-dihydroxy-1,1',2,2'-tetrahydrolycopene + A = 1,1'-dihydroxy-3,4-didehydro-1,2-dihydrolycopene + AH2. The protein operates within carotenoid biosynthesis. Functionally, catalyzes the introduction of a C-3,4 double bond into 1'-hydroxy-gamma-carotene and rhodopin (1-hydroxylycopene) to yield 1'-hydroxytorulene and (3E)-3,4-didehydrorhodopin, respectively. Can also use 1-hydroxy-all-trans-1,2-dihydro-neurosporene, 1,1'-dihydroxy-1,1',2,2'-tetrahydroneurosporene and 1,1'-dihydroxy-1,1',2,2'-tetrahydrolycopene. Probably involved in the synthesis of myxol, a gamma-carotene derivative. May use FAD as a proton acceptor. This Nonlabens dokdonensis (strain DSM 17205 / KCTC 12402 / DSW-6) (Donghaeana dokdonensis) protein is 1-hydroxycarotenoid 3,4-desaturase.